We begin with the raw amino-acid sequence, 396 residues long: S-adenosylmethionine synthase (396 aa).

Histidine 16 is a binding site for ATP. Aspartate 18 serves as a coordination point for Mg(2+). Residue glutamate 44 coordinates K(+). 2 residues coordinate L-methionine: glutamate 57 and glutamine 100. Residues 100–110 are flexible loop; it reads QSPDIAQGVDR. ATP is bound by residues 167-169, 232-233, aspartate 241, 247-248, alanine 264, and lysine 268; these read DAK, RF, and RK. Aspartate 241 serves as a coordination point for L-methionine. Residue lysine 272 coordinates L-methionine.

Belongs to the AdoMet synthase family. In terms of assembly, homotetramer; dimer of dimers. Requires Mg(2+) as cofactor. K(+) serves as cofactor.

The protein resides in the cytoplasm. The enzyme catalyses L-methionine + ATP + H2O = S-adenosyl-L-methionine + phosphate + diphosphate. The protein operates within amino-acid biosynthesis; S-adenosyl-L-methionine biosynthesis; S-adenosyl-L-methionine from L-methionine: step 1/1. Its function is as follows. Catalyzes the formation of S-adenosylmethionine (AdoMet) from methionine and ATP. The overall synthetic reaction is composed of two sequential steps, AdoMet formation and the subsequent tripolyphosphate hydrolysis which occurs prior to release of AdoMet from the enzyme. This is S-adenosylmethionine synthase from Ralstonia nicotianae (strain ATCC BAA-1114 / GMI1000) (Ralstonia solanacearum).